A 362-amino-acid polypeptide reads, in one-letter code: N-acylethanolamine-hydrolyzing acid amidase (362 aa).

The signal sequence occupies residues 1–33 (MGTPAIRAACHGAHLALALLLLLSLSDPWLWAT). Asn-42 and Asn-112 each carry an N-linked (GlcNAc...) asparagine glycan. Catalysis depends on Cys-131, which acts as the Nucleophile. Residues Asn-314 and Asn-338 are each glycosylated (N-linked (GlcNAc...) asparagine).

It belongs to the acid ceramidase family. In terms of assembly, heterodimer of an alpha and a beta subunit, produced by autocatalytic cleavage. N-glycosylated. Tunicamycin treatment causes a reduction in specific activity against N-palmitoylethanolamine. In terms of processing, autoproteolytic cleavage at pH 4.5 gives rise to the alpha and beta subunit. Cleavage gives rise to a conformation change that activates the enzyme. The same catalytic Cys residue mediates the autoproteolytic cleavage and subsequent hydrolysis of lipid substrates. In terms of tissue distribution, expressed in brain, cecum, colon, heart, ileum, kidney, liver, lung, spleen, stomach, submaxillary gland, testis and thymus.

The protein localises to the lysosome. It localises to the membrane. The catalysed reaction is N-hexadecanoylethanolamine + H2O = ethanolamine + hexadecanoate. It catalyses the reaction an N-(long-chain fatty acyl)ethanolamine + H2O = a long-chain fatty acid + ethanolamine. The enzyme catalyses N-dodecanoylethanolamine + H2O = dodecanoate + ethanolamine. It carries out the reaction N-tetradecanoylethanolamine + H2O = tetradecanoate + ethanolamine. The catalysed reaction is an N-acylsphing-4-enine + H2O = sphing-4-enine + a fatty acid. It catalyses the reaction N-hexadecanoylsphing-4-enine + H2O = sphing-4-enine + hexadecanoate. The enzyme catalyses N-dodecanoylsphing-4-enine + H2O = dodecanoate + sphing-4-enine. It functions in the pathway lipid metabolism; fatty acid metabolism. Stimulated by DTT. Stimulated by nonionic detergent of the polyoxyethylenep-t-octylphenylether type (Triton X-100 or Nonidet P-40) whereas 3-[(3-cholamidopropyl)dimethylammonio]propane-1-sulfonate (CHAPS) and octyl alpha-D-glucopyranoside decrease the N-(long-chain-acyl)ethanolamine deacylase activity. Polysorbate 20 (Tween 20) is inhibitory. Stimulated by endogenous phospholipids such as choline- or ethanolamine-containing phospholipids, and dihydrolipoic acid. Degrades bioactive fatty acid amides to their corresponding acids, with the following preference: N-palmitoylethanolamine &gt; N-myristoylethanolamine &gt; N-stearoylethanolamine &gt; N-oleoylethanolamine &gt; N-linoleoylethanolamine &gt; N-arachidonoylethanolamine. The protein is N-acylethanolamine-hydrolyzing acid amidase of Rattus norvegicus (Rat).